Consider the following 232-residue polypeptide: Phosphatidylserine decarboxylase proenzyme (232 aa).

Catalysis depends on Ser-190, which acts as the Schiff-base intermediate with substrate; via pyruvic acid. Ser-190 carries the post-translational modification Pyruvic acid (Ser); by autocatalysis.

This sequence belongs to the phosphatidylserine decarboxylase family. PSD-A subfamily. As to quaternary structure, heterodimer of a large membrane-associated beta subunit and a small pyruvoyl-containing alpha subunit. Pyruvate serves as cofactor. Is synthesized initially as an inactive proenzyme. Formation of the active enzyme involves a self-maturation process in which the active site pyruvoyl group is generated from an internal serine residue via an autocatalytic post-translational modification. Two non-identical subunits are generated from the proenzyme in this reaction, and the pyruvate is formed at the N-terminus of the alpha chain, which is derived from the carboxyl end of the proenzyme. The post-translation cleavage follows an unusual pathway, termed non-hydrolytic serinolysis, in which the side chain hydroxyl group of the serine supplies its oxygen atom to form the C-terminus of the beta chain, while the remainder of the serine residue undergoes an oxidative deamination to produce ammonia and the pyruvoyl prosthetic group on the alpha chain.

It localises to the cell membrane. The catalysed reaction is a 1,2-diacyl-sn-glycero-3-phospho-L-serine + H(+) = a 1,2-diacyl-sn-glycero-3-phosphoethanolamine + CO2. It participates in phospholipid metabolism; phosphatidylethanolamine biosynthesis; phosphatidylethanolamine from CDP-diacylglycerol: step 2/2. Its function is as follows. Catalyzes the formation of phosphatidylethanolamine (PtdEtn) from phosphatidylserine (PtdSer). This is Phosphatidylserine decarboxylase proenzyme from Rhodopseudomonas palustris (strain BisB5).